The primary structure comprises 342 residues: tRNA N6-adenosine threonylcarbamoyltransferase (342 aa).

H111 and H115 together coordinate Fe cation. Substrate is bound by residues 134–138, D167, G180, and N275; that span reads LVSGG. D303 contacts Fe cation.

This sequence belongs to the KAE1 / TsaD family. Fe(2+) serves as cofactor.

It is found in the cytoplasm. The catalysed reaction is L-threonylcarbamoyladenylate + adenosine(37) in tRNA = N(6)-L-threonylcarbamoyladenosine(37) in tRNA + AMP + H(+). Its function is as follows. Required for the formation of a threonylcarbamoyl group on adenosine at position 37 (t(6)A37) in tRNAs that read codons beginning with adenine. Is involved in the transfer of the threonylcarbamoyl moiety of threonylcarbamoyl-AMP (TC-AMP) to the N6 group of A37, together with TsaE and TsaB. TsaD likely plays a direct catalytic role in this reaction. This is tRNA N6-adenosine threonylcarbamoyltransferase from Paraburkholderia xenovorans (strain LB400).